The following is a 152-amino-acid chain: UPF0178 protein SAR0734 (152 aa).

This sequence belongs to the UPF0178 family.

This chain is UPF0178 protein SAR0734, found in Staphylococcus aureus (strain MRSA252).